Here is a 337-residue protein sequence, read N- to C-terminus: Ribosomal RNA small subunit methyltransferase C (337 aa).

This sequence belongs to the methyltransferase superfamily. RsmC family. In terms of assembly, monomer.

It is found in the cytoplasm. The enzyme catalyses guanosine(1207) in 16S rRNA + S-adenosyl-L-methionine = N(2)-methylguanosine(1207) in 16S rRNA + S-adenosyl-L-homocysteine + H(+). In terms of biological role, specifically methylates the guanine in position 1207 of 16S rRNA in the 30S particle. This Acinetobacter baumannii (strain AB307-0294) protein is Ribosomal RNA small subunit methyltransferase C.